We begin with the raw amino-acid sequence, 353 residues long: Beta-agarase B (353 aa).

A signal peptide spans 1–17 (MYLIYLRLVFCCALLLG). Cysteine 18 carries the N-palmitoyl cysteine lipid modification. Cysteine 18 carries the S-diacylglycerol cysteine lipid modification. Residues 30–58 (LPVEQEQEQETEQEGEPEESSEQDLVEEV) are disordered. Acidic residues predominate over residues 32–58 (VEQEQEQETEQEGEPEESSEQDLVEEV). A GH16 domain is found at 58–353 (VDWKDIPVPA…WIRIYKPVEK (296 aa)). Substrate contacts are provided by residues 105–107 (YHN) and aspartate 181. The Nucleophile role is filled by glutamate 184. Glutamate 189 (proton donor) is an active-site residue. Histidine 215, arginine 219, aspartate 224, glutamine 226, and glutamate 308 together coordinate substrate.

It belongs to the glycosyl hydrolase 16 family. Homodimer.

Its subcellular location is the cell outer membrane. The catalysed reaction is Hydrolysis of (1-&gt;4)-beta-D-galactosidic linkages in agarose, giving the tetramer as the predominant product.. Its function is as follows. Cleaves the beta-1,4-linkages between beta-D-galactose and alpha-L-3,6-anhydro-galactose residues in agarose. Cleaves agarose in a random manner with retention of the anomeric-bond configuration, producing beta-anomers that give rise progressively to alpha-anomers when mutarotation takes place. Also tolerant to hybrid substrates containing C6-sulfate groups at the -4, +1, and +3 positions. The chain is Beta-agarase B (agaB) from Zobellia galactanivorans (strain DSM 12802 / CCUG 47099 / CIP 106680 / NCIMB 13871 / Dsij).